A 419-amino-acid polypeptide reads, in one-letter code: Cell division protein FtsZ (419 aa).

GTP contacts are provided by residues 22–26 (GGGGN), 109–111 (GSG), Glu140, Arg144, and Asp188. The tract at residues 397 to 419 (ERFEAPISQDEDELDTPPFFKNR) is disordered.

Belongs to the FtsZ family. As to quaternary structure, homodimer. Polymerizes to form a dynamic ring structure in a strictly GTP-dependent manner. Interacts directly with several other division proteins. Interacts with CcrZ; the interaction is direct.

Its subcellular location is the cytoplasm. Functionally, essential cell division protein that forms a contractile ring structure (Z ring) at the future cell division site. The regulation of the ring assembly controls the timing and the location of cell division. One of the functions of the FtsZ ring is to recruit other cell division proteins to the septum to produce a new cell wall between the dividing cells. Binds GTP and shows GTPase activity. The sequence is that of Cell division protein FtsZ from Streptococcus pneumoniae serotype 2 (strain D39 / NCTC 7466).